We begin with the raw amino-acid sequence, 198 residues long: Recombination protein RecR (198 aa).

The segment at 56-71 (CTTCGNIDTHDPCAIC) adopts a C4-type zinc-finger fold. Positions 79 to 174 (RSLCVVEEVS…RLTQLAHGLP (96 aa)) constitute a Toprim domain.

The protein belongs to the RecR family.

May play a role in DNA repair. It seems to be involved in an RecBC-independent recombinational process of DNA repair. It may act with RecF and RecO. In Sphingopyxis alaskensis (strain DSM 13593 / LMG 18877 / RB2256) (Sphingomonas alaskensis), this protein is Recombination protein RecR.